Consider the following 321-residue polypeptide: Sideroflexin-3 (321 aa).

At Met1 the chain carries N-acetylmethionine. The next 4 membrane-spanning stretches (helical) occupy residues 146 to 164, 174 to 194, 226 to 246, and 266 to 286; these read LGMA…ALGL, LVGR…NIPL, FQVV…PPVI, and LQMG…CALF.

This sequence belongs to the sideroflexin family.

It is found in the mitochondrion membrane. It catalyses the reaction L-serine(in) = L-serine(out). In terms of biological role, mitochondrial serine transporter that mediates transport of serine into mitochondria, an important step of the one-carbon metabolism pathway. Mitochondrial serine is converted to glycine and formate, which then exits to the cytosol where it is used to generate the charged folates that serve as one-carbon donors. This is Sideroflexin-3 (SFXN3) from Bos taurus (Bovine).